A 301-amino-acid chain; its full sequence is tRNA uridine(34) hydroxylase (301 aa).

Positions 121–212 (NDKDTLVLDS…YLKNIKKKES (92 aa)) constitute a Rhodanese domain. Cysteine 172 (cysteine persulfide intermediate) is an active-site residue.

The protein belongs to the TrhO family.

It catalyses the reaction uridine(34) in tRNA + AH2 + O2 = 5-hydroxyuridine(34) in tRNA + A + H2O. Functionally, catalyzes oxygen-dependent 5-hydroxyuridine (ho5U) modification at position 34 in tRNAs. The chain is tRNA uridine(34) hydroxylase from Pelagibacter ubique (strain HTCC1062).